We begin with the raw amino-acid sequence, 365 residues long: Histidinol-phosphate aminotransferase (365 aa).

N6-(pyridoxal phosphate)lysine is present on K227.

This sequence belongs to the class-II pyridoxal-phosphate-dependent aminotransferase family. Histidinol-phosphate aminotransferase subfamily. Homodimer. Pyridoxal 5'-phosphate serves as cofactor.

It catalyses the reaction L-histidinol phosphate + 2-oxoglutarate = 3-(imidazol-4-yl)-2-oxopropyl phosphate + L-glutamate. It functions in the pathway amino-acid biosynthesis; L-histidine biosynthesis; L-histidine from 5-phospho-alpha-D-ribose 1-diphosphate: step 7/9. This is Histidinol-phosphate aminotransferase from Polaromonas naphthalenivorans (strain CJ2).